The following is a 501-amino-acid chain: Membrane-bound lytic murein transglycosylase F (501 aa).

The N-terminal stretch at 1-29 is a signal peptide; sequence MTKILLNTASTVLTRLWKLSLLGLVFAVA. Positions 30-274 are non-LT domain; sequence AATLVSSRIP…DAMETFYGHL (245 aa). The tract at residues 275-501 is LT domain; it reads GEIDYSGAIL…VKSISGTSSL (227 aa). Residue Glu321 is part of the active site.

This sequence in the N-terminal section; belongs to the bacterial solute-binding protein 3 family. The protein in the C-terminal section; belongs to the transglycosylase Slt family.

The protein resides in the cell outer membrane. It carries out the reaction Exolytic cleavage of the (1-&gt;4)-beta-glycosidic linkage between N-acetylmuramic acid (MurNAc) and N-acetylglucosamine (GlcNAc) residues in peptidoglycan, from either the reducing or the non-reducing ends of the peptidoglycan chains, with concomitant formation of a 1,6-anhydrobond in the MurNAc residue.. Murein-degrading enzyme that degrades murein glycan strands and insoluble, high-molecular weight murein sacculi, with the concomitant formation of a 1,6-anhydromuramoyl product. Lytic transglycosylases (LTs) play an integral role in the metabolism of the peptidoglycan (PG) sacculus. Their lytic action creates space within the PG sacculus to allow for its expansion as well as for the insertion of various structures such as secretion systems and flagella. The protein is Membrane-bound lytic murein transglycosylase F of Saccharophagus degradans (strain 2-40 / ATCC 43961 / DSM 17024).